The sequence spans 290 residues: Arylamine N-acetyltransferase 1 (290 aa).

At Met1 the chain carries N-acetylmethionine. Cys68 acts as the Acyl-thioester intermediate in catalysis. Residues Thr103 and Gly104 each contribute to the CoA site. Substrate is bound at residue 106–107; the sequence is IH. Active-site residues include His107 and Asp122. CoA-binding residues include Tyr208 and Ser214.

It belongs to the arylamine N-acetyltransferase family.

It is found in the cytoplasm. It catalyses the reaction an arylamine + acetyl-CoA = an N-acetylarylamine + CoA. The protein is Arylamine N-acetyltransferase 1 (NAT1) of Oryctolagus cuniculus (Rabbit).